The chain runs to 698 residues: SHC SH2 domain-binding protein 1 homolog B (698 aa).

3 PbH1 repeats span residues 480 to 502 (CAEL…EIYP), 503 to 524 (GSKC…LIKD), and 532 to 554 (IPKI…VLVK).

Its subcellular location is the midbody. It is found in the cytoplasm. The protein localises to the cytoskeleton. The protein resides in the spindle. Its function is as follows. May play a role in signaling pathways governing cellular proliferation. In Xenopus laevis (African clawed frog), this protein is SHC SH2 domain-binding protein 1 homolog B (shcbp1-b).